Reading from the N-terminus, the 610-residue chain is Replication protein E1 (610 aa).

The Nuclear localization signal motif lies at 83-85 (KRK). Ser93 and Ser102 each carry phosphoserine; by host. The short motif at 101 to 110 (LSPRLEAVTI) is the Nuclear export signal element. Positions 148-312 (ESGTLVVETD…MLDHESAASS (165 aa)) are DNA-binding region. In terms of domain architecture, SF3 helicase spans 411 to 561 (VNFISFLCAL…LPLKENDEVL (151 aa)). Residue 437-444 (GPPDTGKS) coordinates ATP. A Glycyl lysine isopeptide (Lys-Gly) (interchain with G-Cter in SUMO) cross-link involves residue Lys518. The disordered stretch occupies residues 591–610 (ESGRSDRAFRCTAGTNTESI).

The protein belongs to the papillomaviridae E1 protein family. Can form hexamers. Interacts with E2 protein; this interaction increases E1 DNA binding specificity. Interacts with host DNA polymerase subunit POLA2. Interacts with host single stranded DNA-binding protein RPA1. Interacts with host TOP1; this interaction stimulates the enzymatic activity of TOP1. Post-translationally, phosphorylated. In terms of processing, sumoylated.

The protein localises to the host nucleus. The catalysed reaction is Couples ATP hydrolysis with the unwinding of duplex DNA by translocating in the 3'-5' direction.. The enzyme catalyses ATP + H2O = ADP + phosphate + H(+). ATP-dependent DNA 3'-5' helicase required for initiation of viral DNA replication. It forms a complex with the viral E2 protein. The E1-E2 complex binds to the replication origin which contains binding sites for both proteins. During the initial step, a dimer of E1 interacts with a dimer of protein E2 leading to a complex that binds the viral origin of replication with high specificity. Then, a second dimer of E1 displaces the E2 dimer in an ATP-dependent manner to form the E1 tetramer. Following this, two E1 monomers are added to each half of the site, which results in the formation of two E1 trimers on the viral ori. Subsequently, two hexamers will be created. The double hexamer acts as a bi-directional helicase machinery and unwinds the viral DNA and then recruits the host DNA polymerase to start replication. This is Replication protein E1 from Human papillomavirus type 60.